The primary structure comprises 155 residues: Small ribosomal subunit protein uS7cz/uS7cy (155 aa).

It belongs to the universal ribosomal protein uS7 family. In terms of assembly, part of the 30S ribosomal subunit.

The protein resides in the plastid. It localises to the chloroplast. In terms of biological role, one of the primary rRNA binding proteins, it binds directly to 16S rRNA where it nucleates assembly of the head domain of the 30S subunit. This chain is Small ribosomal subunit protein uS7cz/uS7cy (rps7-A), found in Acorus calamus var. americanus (American sweet flag).